The primary structure comprises 107 residues: U1-lycotoxin-Ls1k (107 aa).

The signal sequence occupies residues 1–20 (MMKVLVVVALLVTLISYSSS). The propeptide occupies 21–41 (EGIDDLEADELLSLMANEQTR). 4 cysteine pairs are disulfide-bonded: C44-C59, C51-C68, C58-C86, and C70-C84.

It belongs to the neurotoxin 19 (CSTX) family. 04 (U1-Lctx) subfamily. As to expression, expressed by the venom gland.

The protein resides in the secreted. This Lycosa singoriensis (Wolf spider) protein is U1-lycotoxin-Ls1k.